Reading from the N-terminus, the 158-residue chain is Transcription elongation factor GreA (158 aa).

A coiled-coil region spans residues 48-75; that stretch reads NSEYDSAKEDQAFVEGRIAQLEKMIRNA.

Belongs to the GreA/GreB family.

Functionally, necessary for efficient RNA polymerase transcription elongation past template-encoded arresting sites. The arresting sites in DNA have the property of trapping a certain fraction of elongating RNA polymerases that pass through, resulting in locked ternary complexes. Cleavage of the nascent transcript by cleavage factors such as GreA or GreB allows the resumption of elongation from the new 3'terminus. GreA releases sequences of 2 to 3 nucleotides. In Shouchella clausii (strain KSM-K16) (Alkalihalobacillus clausii), this protein is Transcription elongation factor GreA.